A 367-amino-acid chain; its full sequence is Pectate lyase 1 (367 aa).

A signal peptide spans 1-21; sequence MASPCLIAVLVFLCAIVSCYS. Cys-28 and Cys-45 form a disulfide bridge. The segment at 38 to 305 is beta-helix; the sequence is NRMKLADCAV…YKKEVTKRIG (268 aa). The segment at 92–104 is igE-binding. Binds to IgE in 5 out of 7 patients tested; the sequence is IFSQNMNIKLKMP. A disulfide bridge connects residues Cys-128 and Cys-147. Asn-148 carries an N-linked (GlcNAc...) asparagine glycan. Position 170 (Asp-170) interacts with Ca(2+). Asn-178 is a glycosylation site (N-linked (GlcNAc...) asparagine). 2 residues coordinate Ca(2+): Asp-194 and Asp-198. Residues 239–250 form an igE-binding. Binds to IgE in 6 out of 7 patients tested region; it reads AFNQFGPNAGQR. The active site involves Arg-250. Positions 251–258 are igE-binding. Binds to IgE in 5 out of 7 patients tested; that stretch reads MPRARYGL. Cys-306 and Cys-312 are joined by a disulfide. The interval 317-327 is igE-binding. Binds to IgE in 3 out of 7 patients tested; that stretch reads WRSTRDAFING.

Belongs to the polysaccharide lyase 1 family. Amb a subfamily. Requires Ca(2+) as cofactor. Post-translationally, N-glycosylated; consists of complex-type N-glycans containing the Lewis a antigen (Galbeta1-3(Fucalpha1-4)GlcNAcbeta1-). In terms of tissue distribution, expressed in pollen (at protein level).

The catalysed reaction is Eliminative cleavage of (1-&gt;4)-alpha-D-galacturonan to give oligosaccharides with 4-deoxy-alpha-D-galact-4-enuronosyl groups at their non-reducing ends.. It participates in glycan metabolism; pectin degradation; 2-dehydro-3-deoxy-D-gluconate from pectin: step 2/5. Its function is as follows. Has low pectate lyase activity. The protein is Pectate lyase 1 of Juniperus ashei (Ozark white cedar).